Reading from the N-terminus, the 264-residue chain is 5'-nucleotidase SurE (264 aa).

Positions 10, 11, 43, and 99 each coordinate a divalent metal cation.

The protein belongs to the SurE nucleotidase family. Requires a divalent metal cation as cofactor.

The protein resides in the cytoplasm. It catalyses the reaction a ribonucleoside 5'-phosphate + H2O = a ribonucleoside + phosphate. Its function is as follows. Nucleotidase that shows phosphatase activity on nucleoside 5'-monophosphates. This is 5'-nucleotidase SurE from Methanococcus maripaludis (strain C7 / ATCC BAA-1331).